Reading from the N-terminus, the 630-residue chain is Vacuolar protein 8 (630 aa).

Gly-2 carries the N-myristoyl glycine lipid modification. ARM repeat units lie at residues 74 to 115 (EITE…NLAV), 117 to 156 (AENK…NLAT), 158 to 197 (DENK…NMTH), 199 to 238 (DENR…NIAV), 242 to 281 (NRKK…NLAS), 283 to 322 (SKYQ…NVSI), 324 to 364 (PANE…NLAA), 408 to 447 (DDLK…NLSS), and 456 to 495 (FNAV…QLLE). Disordered regions lie at residues 519 to 558 (AKSP…EGEG) and 572 to 630 (EVGE…GRDR). A compositionally biased stretch (acidic residues) spans 543–558 (SEDEFEDGLTDQEGEG). The span at 598-607 (GQGQTSQVGS) shows a compositional bias: polar residues.

This sequence belongs to the beta-catenin family.

The protein localises to the vacuole membrane. Its function is as follows. Functions in both vacuole inheritance and protein targeting from the cytoplasm to vacuole. The polypeptide is Vacuolar protein 8 (VAC8) (Cryptococcus neoformans var. neoformans serotype D (strain B-3501A) (Filobasidiella neoformans)).